We begin with the raw amino-acid sequence, 303 residues long: Elongation factor Ts (303 aa).

Residues 81–84 form an involved in Mg(2+) ion dislocation from EF-Tu region; it reads TDFV.

This sequence belongs to the EF-Ts family.

The protein localises to the cytoplasm. Associates with the EF-Tu.GDP complex and induces the exchange of GDP to GTP. It remains bound to the aminoacyl-tRNA.EF-Tu.GTP complex up to the GTP hydrolysis stage on the ribosome. This is Elongation factor Ts from Mesomycoplasma hyopneumoniae (strain 7448) (Mycoplasma hyopneumoniae).